Consider the following 401-residue polypeptide: Tryptophan synthase beta chain (401 aa).

Lys92 carries the post-translational modification N6-(pyridoxal phosphate)lysine.

The protein belongs to the TrpB family. As to quaternary structure, tetramer of two alpha and two beta chains. Pyridoxal 5'-phosphate is required as a cofactor.

The catalysed reaction is (1S,2R)-1-C-(indol-3-yl)glycerol 3-phosphate + L-serine = D-glyceraldehyde 3-phosphate + L-tryptophan + H2O. It functions in the pathway amino-acid biosynthesis; L-tryptophan biosynthesis; L-tryptophan from chorismate: step 5/5. In terms of biological role, the beta subunit is responsible for the synthesis of L-tryptophan from indole and L-serine. This chain is Tryptophan synthase beta chain, found in Vesicomyosocius okutanii subsp. Calyptogena okutanii (strain HA).